Reading from the N-terminus, the 68-residue chain is Movement protein TGBp3 (68 aa).

The Lumenal segment spans residues 1–6; that stretch reads MFSGKE. A helical membrane pass occupies residues 7-26; that stretch reads ITLFALSTLIALIVLNYMSA. At 27–68 the chain is on the cytoplasmic side; sequence TPNPVCLIELTGHSAVLRGNNCESLTSGVIEALSAHLHGLRN.

This sequence belongs to the Tymovirales TGBp3 protein family.

The protein localises to the host endoplasmic reticulum membrane. Plays a role in viral cell-to-cell propagation, by facilitating genome transport to neighboring plant cells through plasmosdesmata. May induce the formation of granular vesicles derived from the Endoplasmic reticulum, which align on actin filaments. This Papaya mosaic potexvirus (PMV) protein is Movement protein TGBp3.